Reading from the N-terminus, the 490-residue chain is GTPase Der (490 aa).

EngA-type G domains follow at residues 3-166 (PVVA…MEDL) and 203-376 (IKLA…DSST). GTP-binding positions include 9 to 16 (GRPNVGKS), 56 to 60 (DTGGI), 118 to 121 (NKTD), 209 to 216 (GRPNVGKS), 256 to 260 (DTAGV), and 321 to 324 (NKWD). The 85-residue stretch at 377–461 (RRVGTSMLTR…PIRIQFKEGE (85 aa)) folds into the KH-like domain.

It belongs to the TRAFAC class TrmE-Era-EngA-EngB-Septin-like GTPase superfamily. EngA (Der) GTPase family. In terms of assembly, associates with the 50S ribosomal subunit.

Its function is as follows. GTPase that plays an essential role in the late steps of ribosome biogenesis. This Escherichia fergusonii (strain ATCC 35469 / DSM 13698 / CCUG 18766 / IAM 14443 / JCM 21226 / LMG 7866 / NBRC 102419 / NCTC 12128 / CDC 0568-73) protein is GTPase Der.